The chain runs to 64 residues: MRCVPVFIILLLLSPSAPSVDAHPKTKDDVPLASFHDDAKRTLQRLWIKALCCYGYRFCCPNFR.

An N-terminal signal peptide occupies residues 1 to 22; the sequence is MRCVPVFIILLLLSPSAPSVDA. The propeptide occupies 23–48; the sequence is HPKTKDDVPLASFHDDAKRTLQRLWI.

Belongs to the conotoxin T superfamily. Contains 2 disulfide bonds that can be either 'C1-C3, C2-C4' or 'C1-C4, C2-C3', since these disulfide connectivities have been observed for conotoxins with cysteine framework V (for examples, see AC P0DQQ7 and AC P81755). In terms of tissue distribution, expressed by the venom duct.

It is found in the secreted. This Conus lividus (Livid cone) protein is Conotoxin LiC121.